Consider the following 177-residue polypeptide: Nucleoside triphosphate/diphosphate phosphatase (177 aa).

Arg23 (proton donor) is an active-site residue. Asn87, Asp103, Asp105, Asp107, Asp120, and Glu123 together coordinate Mg(2+).

Belongs to the Ntdp family. Mg(2+) is required as a cofactor.

The enzyme catalyses a ribonucleoside 5'-triphosphate + H2O = a ribonucleoside 5'-diphosphate + phosphate + H(+). It catalyses the reaction a ribonucleoside 5'-diphosphate + H2O = a ribonucleoside 5'-phosphate + phosphate + H(+). Has nucleoside phosphatase activity towards nucleoside triphosphates and nucleoside diphosphates. This is Nucleoside triphosphate/diphosphate phosphatase from Streptococcus gordonii (strain Challis / ATCC 35105 / BCRC 15272 / CH1 / DL1 / V288).